The sequence spans 363 residues: Branched-chain-amino-acid aminotransferase 2 (363 aa).

Residue Lys-197 is modified to N6-(pyridoxal phosphate)lysine.

It belongs to the class-IV pyridoxal-phosphate-dependent aminotransferase family. Requires pyridoxal 5'-phosphate as cofactor.

It carries out the reaction L-leucine + 2-oxoglutarate = 4-methyl-2-oxopentanoate + L-glutamate. The enzyme catalyses L-isoleucine + 2-oxoglutarate = (S)-3-methyl-2-oxopentanoate + L-glutamate. The catalysed reaction is L-valine + 2-oxoglutarate = 3-methyl-2-oxobutanoate + L-glutamate. It functions in the pathway amino-acid biosynthesis; L-isoleucine biosynthesis; L-isoleucine from 2-oxobutanoate: step 4/4. Its pathway is amino-acid biosynthesis; L-leucine biosynthesis; L-leucine from 3-methyl-2-oxobutanoate: step 4/4. It participates in amino-acid biosynthesis; L-valine biosynthesis; L-valine from pyruvate: step 4/4. Its activity is regulated as follows. Inhibited by canaline. In terms of biological role, transaminates branched-chain amino acids and ketoglutarate. This Bacillus subtilis (strain 168) protein is Branched-chain-amino-acid aminotransferase 2 (ilvK).